The following is a 560-amino-acid chain: MRDLPLTSLALVLSALGALLGTEALRAEEPAVGTSGLIFREDLDWPPGSPQEPLCLVALGGDSNGSSSPLRVVGALSAYEQAFLGAVQRARWGPRDLATFGVCNTGDRQAALPSLRRLGAWLRDPGGQRLVVLHLEEVTWEPTPSLRFQEPPPGGAGPPELALLVLYPGPGPEVTVTRAGLPGAQSLCPSRDTRYLVLAVDRPAGAWRGSGLALTLQPRGEDSRLSTARLQALLFGDDHRCFTRMTPALLLLPRSEPAPLPAHGQLDTVPFPPPRPSAELEESPPSADPFLETLTRLVRALRVPPARASAPRLALDPDALAGFPQGLVNLSDPAALERLLDGEEPLLLLLRPTAATTGDPAPLHDPTSAPWATALARRVAAELQAAAAELRSLPGLPPATAPLLARLLALCPGGPGGLGDPLRALLLLKALQGLRVEWRGRDPRGPGRAQRSAGATAADGPCALRELSVDLRAERSVLIPETYQANNCQGVCGWPQSDRNPRYGNHVVLLLKMQVRGAALARPPCCVPTAYAGKLLISLSEERISAHHVPNMVATECGCR.

A signal peptide spans 1 to 24; the sequence is MRDLPLTSLALVLSALGALLGTEA. Residues 25 to 451 constitute a propeptide that is removed on maturation; the sequence is LRAEEPAVGT…DPRGPGRAQR (427 aa). The N-linked (GlcNAc...) asparagine glycan is linked to Asn-64. Positions 259–287 are disordered; the sequence is PLPAHGQLDTVPFPPPRPSAELEESPPSA. Asn-329 carries N-linked (GlcNAc...) asparagine glycosylation. 3 cysteine pairs are disulfide-bonded: Cys-462/Cys-526, Cys-488/Cys-557, and Cys-492/Cys-559.

This sequence belongs to the TGF-beta family. As to quaternary structure, homodimer; disulfide-linked. Preproprotein is proteolytically processed to generate N- and C-terminal cleavage products that homodimerize and associate to form a biologically active non-covalent complex. Binding of the non-covalent complex to AMHR2 induces dissociation of the pro-region from the mature C-terminal dimer. The N-terminal portion of the protein, despite having no intrinsic activity, has the role of amplifying the activity of the C-terminus. As to expression, in ovaries, AMH is detected in granulosa cells of early growing follicles.

It localises to the secreted. Functionally, plays an important role in several reproductive functions. Induces Muellerian duct regression during male fetal sexual differentiation. Also plays a role in Leydig cell differentiation and function. In female acts as a negative regulator of the primordial to primary follicle transition and decreases FSH sensitivity of growing follicles. AMH signals by binding to a specific type-II receptor, AMHR2, that heterodimerizes with type-I receptors (ACVR1 and BMPR1A), and recruiting SMAD proteins that are translocated to the nucleus to regulate target gene expression. In Homo sapiens (Human), this protein is Muellerian-inhibiting factor.